The following is a 437-amino-acid chain: Minor fimbrial subunit HifE (437 aa).

Positions 1–30 (MNKKSYINHYLTLFKVTTLLFTLSSNPVWA) are cleaved as a signal peptide.

This sequence belongs to the fimbrial protein family.

The protein resides in the fimbrium. May be a minor structural protein required for pilus biogenesis. May be the adhesive component in the pili. In Haemophilus influenzae, this protein is Minor fimbrial subunit HifE (hifE).